A 247-amino-acid chain; its full sequence is MKLKVIVADRQLVRPGDILAYIEEAGEVVKFKKIPDKHVYIFDNKIISDLVGVVNVSGEDIQVIPLEGVYIPRKDDLVIGIVENVGVTAWTLDIRSPYPGVLNASEVIEGFNPLIHNLRNYLDTGDFVIGRIALFDRTRDPVITVKGKGLGKITEGVVVDVKPSKIPRLIGKRGSMYNLLTSMSGCEITIAQNGFVWLKCHDENRAKVLIQAIKLIELKAHMRGLTEEVKMFLERKLGGGGSGEHQA.

The 74-residue stretch at 75–148 folds into the S1 motif domain; that stretch reads DDLVIGIVEN…RDPVITVKGK (74 aa). One can recognise a KH domain in the interval 154–220; that stretch reads TEGVVVDVKP…QAIKLIELKA (67 aa).

The protein belongs to the RRP4 family. Component of the archaeal exosome complex. Forms a trimer of Rrp4 and/or Csl4 subunits. The trimer associates with a hexameric ring-like arrangement composed of 3 Rrp41-Rrp42 heterodimers.

It localises to the cytoplasm. In terms of biological role, non-catalytic component of the exosome, which is a complex involved in RNA degradation. Increases the RNA binding and the efficiency of RNA degradation. Confers strong poly(A) specificity to the exosome. The sequence is that of Exosome complex component Rrp4 from Thermosphaera aggregans (strain DSM 11486 / M11TL).